We begin with the raw amino-acid sequence, 307 residues long: Ornithine carbamoyltransferase (307 aa).

Residues 53–56 (STRT), Gln80, Arg104, and 131–134 (HPCQ) each bind carbamoyl phosphate. Residues Asn162, Asp220, and 224–225 (SM) each bind L-ornithine. Residues 260–261 (CL) and Arg288 each bind carbamoyl phosphate.

The protein belongs to the aspartate/ornithine carbamoyltransferase superfamily. OTCase family.

The protein resides in the cytoplasm. It catalyses the reaction carbamoyl phosphate + L-ornithine = L-citrulline + phosphate + H(+). It functions in the pathway amino-acid biosynthesis; L-arginine biosynthesis; L-arginine from L-ornithine and carbamoyl phosphate: step 1/3. In terms of biological role, reversibly catalyzes the transfer of the carbamoyl group from carbamoyl phosphate (CP) to the N(epsilon) atom of ornithine (ORN) to produce L-citrulline. The chain is Ornithine carbamoyltransferase from Nitrosomonas eutropha (strain DSM 101675 / C91 / Nm57).